The sequence spans 564 residues: Beta-N-acetylglucosaminidase/beta-glucosidase (564 aa).

Asp283 acts as the Nucleophile in catalysis.

Belongs to the glycosyl hydrolase 3 family.

The enzyme catalyses Hydrolysis of terminal non-reducing N-acetyl-D-hexosamine residues in N-acetyl-beta-D-hexosaminides.. It carries out the reaction Hydrolysis of terminal, non-reducing beta-D-glucosyl residues with release of beta-D-glucose.. In terms of biological role, catalyzes the cleavage of beta-N-acetyl-D-glucosaminides and beta-D-glucosides. Might be involved in the degradation of glucuronic acid-containing glycosaminoglycans such as hyaluronic acid. This chain is Beta-N-acetylglucosaminidase/beta-glucosidase (nag3), found in Cellulomonas fimi.